Consider the following 450-residue polypeptide: Phosphoglucosamine mutase (450 aa).

Ser-107 acts as the Phosphoserine intermediate in catalysis. The Mg(2+) site is built by Ser-107, Asp-246, Asp-248, and Asp-250. Phosphoserine is present on Ser-107.

This sequence belongs to the phosphohexose mutase family. Mg(2+) is required as a cofactor. Post-translationally, activated by phosphorylation.

It catalyses the reaction alpha-D-glucosamine 1-phosphate = D-glucosamine 6-phosphate. Catalyzes the conversion of glucosamine-6-phosphate to glucosamine-1-phosphate. This is Phosphoglucosamine mutase from Dechloromonas aromatica (strain RCB).